A 398-amino-acid chain; its full sequence is tRNA-specific 2-thiouridylase MnmA (398 aa).

ATP is bound by residues 19 to 26 (AMSGGVDS) and L45. C113 acts as the Nucleophile in catalysis. C113 and C210 are disulfide-bonded. Position 137 (G137) interacts with ATP. Residues 160-162 (RDQ) form an interaction with tRNA region. The active-site Cysteine persulfide intermediate is the C210.

It belongs to the MnmA/TRMU family.

The protein resides in the cytoplasm. It catalyses the reaction S-sulfanyl-L-cysteinyl-[protein] + uridine(34) in tRNA + AH2 + ATP = 2-thiouridine(34) in tRNA + L-cysteinyl-[protein] + A + AMP + diphosphate + H(+). Catalyzes the 2-thiolation of uridine at the wobble position (U34) of tRNA, leading to the formation of s(2)U34. The sequence is that of tRNA-specific 2-thiouridylase MnmA from Rhodopseudomonas palustris (strain BisB5).